We begin with the raw amino-acid sequence, 296 residues long: MMLPLQGAQMLQVLEKSLRRSLPASLKVYGTVFHINHGNPFNLKAVVDKWPDFNTVVVCPQEQDMTDDLDHYTNTYQIYSKDPQNCQEFLGSPELINWKQHLQIQSSQPSLNEAIQNLAVIKSFKVKQTQRILYMAAETAKELAPFLLKSKILSPSGGKPKAINQEMFKLSSMDVTHAQLVSKFWHFGGNERSQRFIERCIQTFPTCCLLGPEGTPVCWDLMDQTGEMRMAGTLPEYRLHGLVTYVIYSHAQKLGKLGFPVYSHVDYSNEAMQKMSYTLQHVPIPRSWNQWNCVPL.

3 positions are modified to N6-acetyllysine; alternate: lysine 16, lysine 127, and lysine 141. N6-succinyllysine; alternate occurs at positions 16, 127, and 141. Lysine 159 bears the N6-acetyllysine mark. Lysine 169 carries the post-translational modification N6-succinyllysine. Lysine 183 and lysine 256 each carry N6-acetyllysine; alternate. 2 positions are modified to N6-succinyllysine; alternate: lysine 183 and lysine 256.

This sequence belongs to the glycine N-acyltransferase family.

It localises to the mitochondrion. It carries out the reaction an acyl-CoA + glycine = an N-acylglycine + CoA + H(+). The enzyme catalyses benzoyl-CoA + glycine = N-benzoylglycine + CoA + H(+). Functionally, mitochondrial acyltransferase which transfers an acyl group to the N-terminus of glycine and glutamine, although much less efficiently. Can conjugate a multitude of substrates to form a variety of N-acylglycines, thereby detoxify xenobiotics, such as benzoic acid or salicylic acid, and endogenous organic acids, such as isovaleric acid. This chain is Glycine N-acyltransferase (GLYAT), found in Pongo abelii (Sumatran orangutan).